The primary structure comprises 209 residues: Probable GTP-binding protein EngB (209 aa).

Residues 27-201 (SGVEIAFAGR…ATKLDSWFAE (175 aa)) form the EngB-type G domain. GTP contacts are provided by residues 35–42 (GRSNAGKS), 62–66 (GRTQL), 80–83 (DLPG), 147–150 (TKAD), and 180–182 (YSA). Mg(2+) contacts are provided by serine 42 and threonine 64.

This sequence belongs to the TRAFAC class TrmE-Era-EngA-EngB-Septin-like GTPase superfamily. EngB GTPase family. The cofactor is Mg(2+).

Functionally, necessary for normal cell division and for the maintenance of normal septation. In Glaesserella parasuis serovar 5 (strain SH0165) (Haemophilus parasuis), this protein is Probable GTP-binding protein EngB.